The sequence spans 281 residues: Biotin synthase (281 aa).

Positions 1–230 (MNQKIFLCSI…AQRIMVAGGR (230 aa)) constitute a Radical SAM core domain. [4Fe-4S] cluster is bound by residues C18, C22, and C25. Residues C62, C97, and R223 each contribute to the [2Fe-2S] cluster site.

The protein belongs to the radical SAM superfamily. Biotin synthase family. Homodimer. Requires [4Fe-4S] cluster as cofactor. [2Fe-2S] cluster is required as a cofactor.

It carries out the reaction (4R,5S)-dethiobiotin + (sulfur carrier)-SH + 2 reduced [2Fe-2S]-[ferredoxin] + 2 S-adenosyl-L-methionine = (sulfur carrier)-H + biotin + 2 5'-deoxyadenosine + 2 L-methionine + 2 oxidized [2Fe-2S]-[ferredoxin]. It participates in cofactor biosynthesis; biotin biosynthesis; biotin from 7,8-diaminononanoate: step 2/2. In terms of biological role, catalyzes the conversion of dethiobiotin (DTB) to biotin by the insertion of a sulfur atom into dethiobiotin via a radical-based mechanism. The polypeptide is Biotin synthase (Sulfurimonas denitrificans (strain ATCC 33889 / DSM 1251) (Thiomicrospira denitrificans (strain ATCC 33889 / DSM 1251))).